The following is a 641-amino-acid chain: 1-deoxy-D-xylulose-5-phosphate synthase (641 aa).

Residues H71 and 112 to 114 (SHA) contribute to the thiamine diphosphate site. D144 is a binding site for Mg(2+). Residues 145–146 (GA), N174, Y285, and E366 each bind thiamine diphosphate. Residue N174 coordinates Mg(2+).

It belongs to the transketolase family. DXPS subfamily. Homodimer. It depends on Mg(2+) as a cofactor. Requires thiamine diphosphate as cofactor.

It catalyses the reaction D-glyceraldehyde 3-phosphate + pyruvate + H(+) = 1-deoxy-D-xylulose 5-phosphate + CO2. It functions in the pathway metabolic intermediate biosynthesis; 1-deoxy-D-xylulose 5-phosphate biosynthesis; 1-deoxy-D-xylulose 5-phosphate from D-glyceraldehyde 3-phosphate and pyruvate: step 1/1. Its function is as follows. Catalyzes the acyloin condensation reaction between C atoms 2 and 3 of pyruvate and glyceraldehyde 3-phosphate to yield 1-deoxy-D-xylulose-5-phosphate (DXP). In Mycobacteroides abscessus (strain ATCC 19977 / DSM 44196 / CCUG 20993 / CIP 104536 / JCM 13569 / NCTC 13031 / TMC 1543 / L948) (Mycobacterium abscessus), this protein is 1-deoxy-D-xylulose-5-phosphate synthase.